Here is a 103-residue protein sequence, read N- to C-terminus: MAPCQGRPKIVIQTSSAYILLGYLEILRQIVLPPQRNLPQMTLPLSRCQTLPVAAVVCTVKHSSVLLNLNILPALLSDLNRLPNQYAHIFNVLVCFQTFILLQ.

This is an uncharacterized protein from Saccharomyces cerevisiae (strain ATCC 204508 / S288c) (Baker's yeast).